We begin with the raw amino-acid sequence, 87 residues long: Small ribosomal subunit protein bS21 (87 aa).

Residues 35–52 (HYEKPSEKKAREKAEAVR) are compositionally biased toward basic and acidic residues. The segment at 35–87 (HYEKPSEKKAREKAEAVRRARKLARKKLQREGLLPSKPKPAFGADRRPSAAAR) is disordered. Basic residues predominate over residues 53-62 (RARKLARKKL). The segment covering 78 to 87 (ADRRPSAAAR) has biased composition (basic and acidic residues).

This is Small ribosomal subunit protein bS21 from Rhodopseudomonas palustris (strain ATCC BAA-98 / CGA009).